Here is a 739-residue protein sequence, read N- to C-terminus: Tegument protein UL47 (739 aa).

A compositionally biased stretch (basic and acidic residues) spans 1–13; that stretch reads MDAARDGRPERRR. Disordered regions lie at residues 1–123 and 154–198; these read MDAA…QDYL and QFPP…DDAA. A Nuclear localization signal motif is present at residues 10 to 30; the sequence is ERRRAVSGTYRTHPFQRPSAR. The span at 28–53 shows a compositional bias: basic residues; it reads SARRSAGRPARCGRRGRGAPRVRRPR. The span at 62–87 shows a compositional bias: acidic residues; that stretch reads EDTSEDENVYDYIDGDSSDSADDYDS. The Nuclear export signal signature appears at 94-121; it reads RGPNHGAGDAMDTDAPPERAPEGGAPQD. Positions 483 to 493 match the Nuclear export signal motif; the sequence is LSAYLTLFVAL.

Belongs to the alphaherpesvirinae HHV-1 UL47 family. Interacts with US3 kinase. Interacts with UL31 and UL34; these interactions seem important for efficient virion nuclear egress. Interacts with UL41/VHS. Interacts with host DDB1. Post-translationally, monoubiquitinated. Phosphorylated by US3. This phosphorylation is required for proper nuclear localization.

The protein resides in the virion tegument. It localises to the host nucleus. Its subcellular location is the host cytoplasm. Functionally, tegument protein that can bind to various RNA transcripts. Plays a role in the attenuation of selective viral and cellular mRNA degradation by modulating the activity of host shutoff RNase UL41/VHS. Also plays a role in the primary envelopment of virions in the perinuclear space, probably by interacting with two nuclear egress proteins UL31 and UL34. In Bovine herpesvirus 1.1 (strain Cooper) (BoHV-1), this protein is Tegument protein UL47.